The primary structure comprises 111 residues: Ribosome-binding factor A (111 aa).

The protein belongs to the RbfA family. In terms of assembly, monomer. Binds 30S ribosomal subunits, but not 50S ribosomal subunits or 70S ribosomes.

Its subcellular location is the cytoplasm. Functionally, one of several proteins that assist in the late maturation steps of the functional core of the 30S ribosomal subunit. Associates with free 30S ribosomal subunits (but not with 30S subunits that are part of 70S ribosomes or polysomes). Required for efficient processing of 16S rRNA. May interact with the 5'-terminal helix region of 16S rRNA. The protein is Ribosome-binding factor A of Helicobacter acinonychis (strain Sheeba).